The primary structure comprises 156 residues: Cyanate hydratase (156 aa).

Active-site residues include Arg-96, Glu-99, and Ser-122.

It belongs to the cyanase family.

It carries out the reaction cyanate + hydrogencarbonate + 3 H(+) = NH4(+) + 2 CO2. Catalyzes the reaction of cyanate with bicarbonate to produce ammonia and carbon dioxide. This is Cyanate hydratase from Pseudomonas fluorescens (strain ATCC BAA-477 / NRRL B-23932 / Pf-5).